Here is a 432-residue protein sequence, read N- to C-terminus: Enolase (432 aa).

(2R)-2-phosphoglycerate is bound at residue Gln167. Glu209 acts as the Proton donor in catalysis. Asp246, Glu291, and Asp318 together coordinate Mg(2+). Residues Lys343, Arg372, Ser373, and Lys394 each contribute to the (2R)-2-phosphoglycerate site. Catalysis depends on Lys343, which acts as the Proton acceptor.

This sequence belongs to the enolase family. Component of the RNA degradosome, a multiprotein complex involved in RNA processing and mRNA degradation. Mg(2+) is required as a cofactor.

The protein resides in the cytoplasm. Its subcellular location is the secreted. The protein localises to the cell surface. It catalyses the reaction (2R)-2-phosphoglycerate = phosphoenolpyruvate + H2O. Its pathway is carbohydrate degradation; glycolysis; pyruvate from D-glyceraldehyde 3-phosphate: step 4/5. In terms of biological role, catalyzes the reversible conversion of 2-phosphoglycerate (2-PG) into phosphoenolpyruvate (PEP). It is essential for the degradation of carbohydrates via glycolysis. The chain is Enolase from Buchnera aphidicola subsp. Cinara cedri (strain Cc).